The following is a 541-amino-acid chain: Protein yellow (541 aa).

A signal peptide spans 1–21 (MFQDKGWVLLTLITLVSPSWA). Residue N144 is glycosylated (N-linked (GlcNAc...) asparagine).

Belongs to the major royal jelly protein family.

Its subcellular location is the secreted. Functionally, controls the pigmentation pattern of the adult cuticle and larval mouth parts. This Drosophila yakuba (Fruit fly) protein is Protein yellow (y).